The sequence spans 273 residues: Dermonecrotic toxin LdSicTox-alphaIB3b (273 aa).

Residue His5 is part of the active site. Mg(2+) is bound by residues Glu25 and Asp27. His41 functions as the Nucleophile in the catalytic mechanism. 2 cysteine pairs are disulfide-bonded: Cys45–Cys51 and Cys47–Cys190. Position 85 (Asp85) interacts with Mg(2+).

Belongs to the arthropod phospholipase D family. Class II subfamily. Requires Mg(2+) as cofactor. Expressed by the venom gland.

The protein resides in the secreted. It catalyses the reaction an N-(acyl)-sphingosylphosphocholine = an N-(acyl)-sphingosyl-1,3-cyclic phosphate + choline. The enzyme catalyses an N-(acyl)-sphingosylphosphoethanolamine = an N-(acyl)-sphingosyl-1,3-cyclic phosphate + ethanolamine. The catalysed reaction is a 1-acyl-sn-glycero-3-phosphocholine = a 1-acyl-sn-glycero-2,3-cyclic phosphate + choline. It carries out the reaction a 1-acyl-sn-glycero-3-phosphoethanolamine = a 1-acyl-sn-glycero-2,3-cyclic phosphate + ethanolamine. Functionally, dermonecrotic toxins cleave the phosphodiester linkage between the phosphate and headgroup of certain phospholipids (sphingolipid and lysolipid substrates), forming an alcohol (often choline) and a cyclic phosphate. This toxin acts on sphingomyelin (SM). It may also act on ceramide phosphoethanolamine (CPE), lysophosphatidylcholine (LPC) and lysophosphatidylethanolamine (LPE), but not on lysophosphatidylserine (LPS), and lysophosphatidylglycerol (LPG). It acts by transphosphatidylation, releasing exclusively cyclic phosphate products as second products. Induces dermonecrosis, hemolysis, increased vascular permeability, edema, inflammatory response, and platelet aggregation. The polypeptide is Dermonecrotic toxin LdSicTox-alphaIB3b (Loxosceles deserta (Desert recluse spider)).